Here is a 147-residue protein sequence, read N- to C-terminus: Acidic phospholipase A2 S7-48J (147 aa).

The signal sequence occupies residues 1–19 (MYPAHLLVLLAVCVSLLGA). Residues 20–27 (SDIPPQPL) constitute a propeptide that is removed on maturation. Cystine bridges form between cysteine 38–cysteine 99, cysteine 54–cysteine 146, cysteine 56–cysteine 72, cysteine 71–cysteine 127, cysteine 78–cysteine 120, cysteine 88–cysteine 113, and cysteine 106–cysteine 118. The Ca(2+) site is built by tyrosine 55, glycine 57, and glycine 59. Histidine 75 is a catalytic residue. Aspartate 76 contributes to the Ca(2+) binding site. The active site involves aspartate 121.

Belongs to the phospholipase A2 family. Group I subfamily. D49 sub-subfamily. The cofactor is Ca(2+). In terms of tissue distribution, expressed by the venom gland.

The protein localises to the secreted. The enzyme catalyses a 1,2-diacyl-sn-glycero-3-phosphocholine + H2O = a 1-acyl-sn-glycero-3-phosphocholine + a fatty acid + H(+). Functionally, snake venom phospholipase A2 (PLA2) that inhibits collagen-induced platelet aggregation. PLA2 catalyzes the calcium-dependent hydrolysis of the 2-acyl groups in 3-sn-phosphoglycerides. The polypeptide is Acidic phospholipase A2 S7-48J (Austrelaps superbus (Lowland copperhead snake)).